Here is a 378-residue protein sequence, read N- to C-terminus: tRNA-specific 2-thiouridylase MnmA (378 aa).

ATP contacts are provided by residues 9–16 (GVSGGVDS) and Met-35. Positions 94–96 (NPD) are interaction with target base in tRNA. The active-site Nucleophile is the Cys-99. Cys-99 and Cys-195 are disulfide-bonded. Gly-123 is a binding site for ATP. Positions 145–147 (KDQ) are interaction with tRNA. Residue Cys-195 is the Cysteine persulfide intermediate of the active site. The segment at 307–308 (RY) is interaction with tRNA.

The protein belongs to the MnmA/TRMU family.

It localises to the cytoplasm. The enzyme catalyses S-sulfanyl-L-cysteinyl-[protein] + uridine(34) in tRNA + AH2 + ATP = 2-thiouridine(34) in tRNA + L-cysteinyl-[protein] + A + AMP + diphosphate + H(+). Functionally, catalyzes the 2-thiolation of uridine at the wobble position (U34) of tRNA, leading to the formation of s(2)U34. The chain is tRNA-specific 2-thiouridylase MnmA from Xanthomonas oryzae pv. oryzae (strain MAFF 311018).